Consider the following 284-residue polypeptide: Cell division protein DivIB (284 aa).

A disordered region spans residues 1–21 (MFGKRKDSKNKAMRDNEELTP). Topologically, residues 1 to 63 (MFGKRKDSKN…GLRKRRLQKR (63 aa)) are cytoplasmic. A helical membrane pass occupies residues 64 to 84 (VITLASIFGISAIISLYAILP). Over 85–284 (VSRVSNIEIE…VGAYAYPYBK (200 aa)) the chain is Extracellular. Residues 86–156 (SRVSNIEIEG…NVVKFKVTEY (71 aa)) enclose the POTRA domain.

Belongs to the FtsQ/DivIB family. DivIB subfamily.

It is found in the cell membrane. Cell division protein that may be involved in stabilizing or promoting the assembly of the division complex. The sequence is that of Cell division protein DivIB from Ligilactobacillus salivarius (strain CECT 5713) (Lactobacillus salivarius).